Reading from the N-terminus, the 315-residue chain is O-antigen chain rhamnosyltransferase WbaN (315 aa).

This sequence belongs to the glycosyltransferase 2 family.

The enzyme catalyses alpha-D-galactosyl-di-trans,octa-cis-undecaprenyl diphosphate + dTDP-beta-L-rhamnose = alpha-L-rhamnosyl-(1-&gt;3)-alpha-D-galactosyl-1-diphospho-di-trans,octa-cis-undecaprenol + dTDP + H(+). The protein operates within bacterial outer membrane biogenesis; LPS O-antigen biosynthesis. Functionally, rhamnosyltransferase involved in the biosynthesis of the repeat unit of the lipopolysaccharide (LPS) O-antigen region. Catalyzes the addition of a rhamnose to the galactosyl-undecaprenyl diphosphate intermediate. The polypeptide is O-antigen chain rhamnosyltransferase WbaN (Salmonella anatum).